A 369-amino-acid chain; its full sequence is GTPase Obg (369 aa).

The Obg domain occupies Met-1 to Leu-159. Residues Ile-128–Glu-148 are disordered. The OBG-type G domain occupies Ala-160 to Ala-333. Residues Gly-166–Ser-173, Phe-191–His-195, Asp-213–Gly-216, Asn-283–Asp-286, and Ser-314–Leu-316 contribute to the GTP site. Ser-173 and Thr-193 together coordinate Mg(2+).

It belongs to the TRAFAC class OBG-HflX-like GTPase superfamily. OBG GTPase family. In terms of assembly, monomer. Mg(2+) serves as cofactor.

The protein localises to the cytoplasm. In terms of biological role, an essential GTPase which binds GTP, GDP and possibly (p)ppGpp with moderate affinity, with high nucleotide exchange rates and a fairly low GTP hydrolysis rate. Plays a role in control of the cell cycle, stress response, ribosome biogenesis and in those bacteria that undergo differentiation, in morphogenesis control. This is GTPase Obg from Herminiimonas arsenicoxydans.